Consider the following 263-residue polypeptide: Proteasome subunit alpha type-1 (263 aa).

An N-acetylmethionine modification is found at Met-1. Residue Ser-110 is modified to Phosphoserine; alternate. Ser-110 is a glycosylation site (O-linked (GlcNAc) serine; alternate). A Glycyl lysine isopeptide (Lys-Gly) (interchain with G-Cter in ubiquitin) cross-link involves residue Lys-115. Residue Ser-177 is modified to Phosphoserine. Lys-208 participates in a covalent cross-link: Glycyl lysine isopeptide (Lys-Gly) (interchain with G-Cter in ubiquitin). The disordered stretch occupies residues 232–263 (FLDGLEERPQRKAQPSQAADEPAEKADEPMEH). The segment covering 253 to 263 (PAEKADEPMEH) has biased composition (basic and acidic residues).

Belongs to the peptidase T1A family. As to quaternary structure, the 26S proteasome consists of a 20S proteasome core and two 19S regulatory subunits. The 20S proteasome core is a barrel-shaped complex made of 28 subunits that are arranged in four stacked rings. The two outer rings are each formed by seven alpha subunits, and the two inner rings are formed by seven beta subunits. The proteolytic activity is exerted by three beta-subunits PSMB5, PSMB6 and PSMB7. Interacts with NOTCH3. Interacts with ZFAND1. Proteolytically cleaved from a C-terminal extension in the course of the conversion of the proteasome from its latent form into its active form. In terms of tissue distribution, ubiquitous.

The protein resides in the cytoplasm. It is found in the nucleus. In terms of biological role, component of the 20S core proteasome complex involved in the proteolytic degradation of most intracellular proteins. This complex plays numerous essential roles within the cell by associating with different regulatory particles. Associated with two 19S regulatory particles, forms the 26S proteasome and thus participates in the ATP-dependent degradation of ubiquitinated proteins. The 26S proteasome plays a key role in the maintenance of protein homeostasis by removing misfolded or damaged proteins that could impair cellular functions, and by removing proteins whose functions are no longer required. Associated with the PA200 or PA28, the 20S proteasome mediates ubiquitin-independent protein degradation. This type of proteolysis is required in several pathways including spermatogenesis (20S-PA200 complex) or generation of a subset of MHC class I-presented antigenic peptides (20S-PA28 complex). The polypeptide is Proteasome subunit alpha type-1 (Psma1) (Rattus norvegicus (Rat)).